Here is a 430-residue protein sequence, read N- to C-terminus: Enolase (430 aa).

Q163 serves as a coordination point for (2R)-2-phosphoglycerate. E205 acts as the Proton donor in catalysis. Mg(2+) is bound by residues D242, E285, and D312. Residues K337, R366, S367, and K388 each contribute to the (2R)-2-phosphoglycerate site. K337 serves as the catalytic Proton acceptor.

This sequence belongs to the enolase family. Requires Mg(2+) as cofactor.

It localises to the cytoplasm. The protein localises to the secreted. The protein resides in the cell surface. It catalyses the reaction (2R)-2-phosphoglycerate = phosphoenolpyruvate + H2O. The protein operates within carbohydrate degradation; glycolysis; pyruvate from D-glyceraldehyde 3-phosphate: step 4/5. Functionally, catalyzes the reversible conversion of 2-phosphoglycerate (2-PG) into phosphoenolpyruvate (PEP). It is essential for the degradation of carbohydrates via glycolysis. The chain is Enolase from Rhodopseudomonas palustris (strain BisB18).